We begin with the raw amino-acid sequence, 187 residues long: Large ribosomal subunit protein uL6c (187 aa).

It belongs to the universal ribosomal protein uL6 family. As to quaternary structure, part of the 50S ribosomal subunit.

The protein resides in the plastid. Its subcellular location is the chloroplast. In terms of biological role, binds 23S rRNA. This is Large ribosomal subunit protein uL6c (rpl6) from Thalassiosira pseudonana (Marine diatom).